The primary structure comprises 196 residues: Potassium-transporting ATPase KdpC subunit (196 aa).

Residues 7–27 (PALVLFFVLTLLTGVAYPLAV) form a helical membrane-spanning segment.

It belongs to the KdpC family. In terms of assembly, the system is composed of three essential subunits: KdpA, KdpB and KdpC.

It localises to the cell inner membrane. In terms of biological role, part of the high-affinity ATP-driven potassium transport (or Kdp) system, which catalyzes the hydrolysis of ATP coupled with the electrogenic transport of potassium into the cytoplasm. This subunit acts as a catalytic chaperone that increases the ATP-binding affinity of the ATP-hydrolyzing subunit KdpB by the formation of a transient KdpB/KdpC/ATP ternary complex. This Polaromonas naphthalenivorans (strain CJ2) protein is Potassium-transporting ATPase KdpC subunit.